The primary structure comprises 166 residues: C-signal (166 aa).

Post-translationally, the mature C-signal (p17) is derived from the precursor sequence (p25) by proteolytic cleavage. The subtilisin-like protease PopC is directly responsible for cleavage of p25 to p17. The cleavage site is probably located between amino acid residues 60 and 68 in p25.

Its subcellular location is the secreted. It localises to the cell outer membrane. Its activity is regulated as follows. Synthesized as a precursor protein (p25), which is cleaved after secretion to generate the mature active C-signal (p17). The p25 precursor purified from M.xanthus cells does not display C-signal activity. Cell-cell signaling protein required for fruiting body formation, a multicellular developmental program that is induced in response to starvation. Necessary for rippling, cellular aggregation, spore differentiation and for gene expression that is initiated after 6 hours of starvation. In starving cells, the C-signal directly induces aggregation and sporulation, which are induced at distinct threshold levels of C-signaling. Contact with C-signaling induces cells to glide with high speed and low stop and reversal frequencies toward aggregation centers. The C-signal acts as a morphogen and induces distinct events at distinct threshold levels. A regulated increase in the level of C-signaling during development ensures the correct temporal order of aggregation and sporulation. The chain is C-signal from Myxococcus xanthus.